Reading from the N-terminus, the 973-residue chain is RNA-directed RNA polymerase (973 aa).

Residues 96-264 are capping; sequence HTHGRAAKFR…RRIIFLEPAA (169 aa). The RdRp catalytic domain occupies 558 to 683; it reads HGTLESDYSR…AHENGLEPAL (126 aa). Catalysis depends on aspartate 669, which acts as the For RdRp/TNTase activity. A disordered region spans residues 853–973; the sequence is VVGPGPRVET…TTTAVVHASA (121 aa). The segment covering 882-891 has biased composition (basic and acidic residues); sequence GHSERRDKSS. Composition is skewed to low complexity over residues 924–935 and 955–973; these read GSGNRRGPTNGR and PPVS…HASA.

This sequence belongs to the nodaviridae RNA polymerase family. As to quaternary structure, homododecamer. Forms 2 stacked rings of 35-nm in diameter, arranged in a crown-like structure at the opening of virus-induced replication vesicles. Interacts with protein B2. The cofactor is Mn(2+).

It localises to the host mitochondrion outer membrane. The enzyme catalyses RNA(n) + a ribonucleoside 5'-triphosphate = RNA(n+1) + diphosphate. RNA-dependent RNA polymerase, which replicates the viral genome composed of 2 RNA segments, RNA1 and RNA2. Does not need an exogenous primer. Also possesses a terminal nucleotidyl transferase (TNTase) activity. The TNTase catalyzes the addition of nucleotide to the 3'-end of plus- and minus-stranded RNAs, probably to repair the 3'-end nucleotide loss. Forms the open necked connection to the cytosol of the virus-induced replication vesicles. Mediates viral RNA1 recruitment. The polypeptide is RNA-directed RNA polymerase (Spodoptera eridania (Southern armyworm)).